The primary structure comprises 134 residues: Large ribosomal subunit protein eL32 (134 aa).

It belongs to the eukaryotic ribosomal protein eL32 family.

This chain is Large ribosomal subunit protein eL32 (RpL32), found in Apis mellifera (Honeybee).